The following is a 446-amino-acid chain: Methionine aminopeptidase 2-3 (446 aa).

The disordered stretch occupies residues 14–116; sequence ITDAGANGAD…ENRYRTTSEE (103 aa). The segment covering 61–76 has biased composition (basic residues); that stretch reads AKKKKNKKRKPKKKQP. The segment covering 86 to 96 has biased composition (polar residues); sequence PLSQLFPNNSY. Residues 98 to 116 show a composition bias toward basic and acidic residues; sequence KGEEVEYKDENRYRTTSEE. His199 serves as a coordination point for substrate. Positions 219, 230, and 299 each coordinate a divalent metal cation. His307 lines the substrate pocket. Positions 332 and 427 each coordinate a divalent metal cation.

It belongs to the peptidase M24A family. Methionine aminopeptidase eukaryotic type 2 subfamily. It depends on Co(2+) as a cofactor. Zn(2+) is required as a cofactor. Requires Mn(2+) as cofactor. The cofactor is Fe(2+).

It localises to the cytoplasm. It catalyses the reaction Release of N-terminal amino acids, preferentially methionine, from peptides and arylamides.. Functionally, cotranslationally removes the N-terminal methionine from nascent proteins. The N-terminal methionine is often cleaved when the second residue in the primary sequence is small and uncharged (Met-Ala-, Cys, Gly, Pro, Ser, Thr, or Val). The protein is Methionine aminopeptidase 2-3 of Aspergillus fumigatus (strain CBS 144.89 / FGSC A1163 / CEA10) (Neosartorya fumigata).